A 122-amino-acid chain; its full sequence is Large ribosomal subunit protein uL14 (122 aa).

It belongs to the universal ribosomal protein uL14 family. In terms of assembly, part of the 50S ribosomal subunit. Forms a cluster with proteins L3 and L19. In the 70S ribosome, L14 and L19 interact and together make contacts with the 16S rRNA in bridges B5 and B8.

Binds to 23S rRNA. Forms part of two intersubunit bridges in the 70S ribosome. The polypeptide is Large ribosomal subunit protein uL14 (Geobacillus sp. (strain WCH70)).